The sequence spans 358 residues: Putative purine permease 12 (358 aa).

10 helical membrane passes run tryptophan 29 to leucine 49, tryptophan 62 to leucine 82, leucine 100 to valine 120, serine 128 to isoleucine 148, isoleucine 153 to leucine 173, leucine 189 to methionine 209, valine 235 to valine 255, leucine 280 to leucine 299, isoleucine 300 to phenylalanine 316, and leucine 320 to tyrosine 340.

The protein belongs to the purine permeases (TC 2.A.7.14) family.

The protein resides in the membrane. The sequence is that of Putative purine permease 12 (PUP12) from Arabidopsis thaliana (Mouse-ear cress).